The sequence spans 1649 residues: eIF-2-alpha kinase GCN2 (1649 aa).

3 disordered regions span residues 1-25 (MAGG…RQDH), 138-158 (NKPP…QEEQ), and 227-256 (HGGS…YSVC). The region spanning 25 to 137 (HELQALEAIY…YHVQSFLSEH (113 aa)) is the RWD domain. Residues 146 to 205 (HEEMLERRAQEEQQRLLEAKRKEEQEQREILHEIQRRKEEIKEEKKRKEMAKQERLEIAS) are a coiled coil. S230 carries the phosphoserine modification. Residues 237–249 (GKHRANSSGRSRR) show a composition bias toward basic residues. Protein kinase domains are found at residues 296 to 539 (VYNA…HSFI) and 590 to 1001 (FEEL…SELL). ATP-binding positions include 596-604 (LGKGAFGAV) and K619. 2 disordered regions span residues 660 to 750 (ERPA…QSFL) and 766 to 788 (ENSK…ESEP). T667 is modified (phosphothreonine). Over residues 705-717 (LSSSVEWSTSGER) the composition is skewed to polar residues. Acidic residues predominate over residues 731–740 (SDDEDDDEDE). A compositionally biased stretch (basic and acidic residues) spans 778–787 (NEKNGCHESE). D848 serves as the catalytic Proton acceptor. T871 carries the phosphothreonine modification. A phosphothreonine; by autocatalysis mark is found at T899 and T904. A histidyl-tRNA synthetase-like region spans residues 1022-1493 (VDGKAYRTMM…DHVLQKLRTK (472 aa)). An N6-acetyllysine modification is found at K1259.

The protein belongs to the protein kinase superfamily. Ser/Thr protein kinase family. GCN2 subfamily. Homodimer; homodimerization is important for kinase activation by uncharged tRNAs. Interacts with GCN1; this interaction stimulates EIF2AK4/GCN2 kinase activity and is impaired by IMPACT upon a variety of stress conditions, such as amino acid depletion, UV-C irradiation, proteasome inhibitor treatment and glucose deprivation. Interacts with DNAJC3; this interaction inhibits EIF2AK4/GCN2 kinase activity during endoplasmic reticulum (ER), hypothermic and amino acid-starving stress conditions. Interacts with MAP3K20; activates EIF2AK4/GCN2 kinase activity in response to moderate ribotoxic stress. As to quaternary structure, (Microbial infection) Interacts with hepatitis E virus (HEV) ORF1 protease; this interaction inhibits dimerization of EIF2AK4 and prevents EIF2AK4-mediated phosphorylation of EIF2A. In terms of processing, autophosphorylated; autophosphorylation on Thr-899 is increased upon amino acid starvation and in UV irradiation cells and inhibited in presence of IMPACT. As to expression, widely expressed. Expressed in lung, smooth muscle cells and macrophages.

The protein localises to the cytoplasm. The enzyme catalyses L-seryl-[protein] + ATP = O-phospho-L-seryl-[protein] + ADP + H(+). It catalyses the reaction L-threonyl-[protein] + ATP = O-phospho-L-threonyl-[protein] + ADP + H(+). Metabolic-stress sensing protein kinase that phosphorylates the alpha subunit of eukaryotic translation initiation factor 2 (EIF2S1/eIF-2-alpha) in response to low amino acid availability. Plays a role as an activator of the integrated stress response (ISR) required for adaptation to amino acid starvation. EIF2S1/eIF-2-alpha phosphorylation in response to stress converts EIF2S1/eIF-2-alpha into a global protein synthesis inhibitor, leading to a global attenuation of cap-dependent translation, and thus to a reduced overall utilization of amino acids, while concomitantly initiating the preferential translation of ISR-specific mRNAs, such as the transcriptional activator ATF4, and hence allowing ATF4-mediated reprogramming of amino acid biosynthetic gene expression to alleviate nutrient depletion. Binds uncharged tRNAs. Required for the translational induction of protein kinase PRKCH following amino acid starvation. Involved in cell cycle arrest by promoting cyclin D1 mRNA translation repression after the unfolded protein response pathway (UPR) activation or cell cycle inhibitor CDKN1A/p21 mRNA translation activation in response to amino acid deprivation. Plays a role in the consolidation of synaptic plasticity, learning as well as formation of long-term memory. Plays a role in neurite outgrowth inhibition. Plays a proapoptotic role in response to glucose deprivation. Promotes global cellular protein synthesis repression in response to UV irradiation independently of the stress-activated protein kinase/c-Jun N-terminal kinase (SAPK/JNK) and p38 MAPK signaling pathways. Plays a role in the antiviral response against alphavirus infection; impairs early viral mRNA translation of the incoming genomic virus RNA, thus preventing alphavirus replication. Its function is as follows. (Microbial infection) Plays a role in modulating the adaptive immune response to yellow fever virus infection; promotes dendritic cells to initiate autophagy and antigene presentation to both CD4(+) and CD8(+) T-cells under amino acid starvation. The polypeptide is eIF-2-alpha kinase GCN2 (Homo sapiens (Human)).